The following is a 677-amino-acid chain: Methionine--tRNA ligase (677 aa).

The short motif at P14 to H24 is the 'HIGH' region element. Positions 145, 148, 158, and 161 each coordinate Zn(2+). The 'KMSKS' region motif lies at K331–S335. Position 334 (K334) interacts with ATP. Residues A575 to K677 form the tRNA-binding domain.

This sequence belongs to the class-I aminoacyl-tRNA synthetase family. MetG type 1 subfamily. Homodimer. Zn(2+) is required as a cofactor.

It localises to the cytoplasm. It catalyses the reaction tRNA(Met) + L-methionine + ATP = L-methionyl-tRNA(Met) + AMP + diphosphate. Functionally, is required not only for elongation of protein synthesis but also for the initiation of all mRNA translation through initiator tRNA(fMet) aminoacylation. The protein is Methionine--tRNA ligase of Pseudomonas aeruginosa (strain LESB58).